We begin with the raw amino-acid sequence, 128 residues long: RYamide neuropeptides (128 aa).

The N-terminal stretch at 1–23 (MHARKLIVVLVYILTVLVSVAVS) is a signal peptide. Positions 26-29 (YTSE) are excised as a propeptide. Residue Tyr-44 is modified to Tyrosine amide. Residues 47-63 (GGPSPNNKENKVNIRPR) constitute a propeptide that is removed on maturation. At Tyr-73 the chain carries Tyrosine amide. Positions 77–128 (SGWSPNASLVYPVSTPLCGLDEDLSCAYTGISDLYRCTPRKGESEEFTTSSN) are excised as a propeptide.

The protein resides in the secreted. Functionally, neuropeptides RYamide-1 and RYamide-2 are ligands for the G-protein coupled receptor RYa-R. RYamide-2 is the most potent activator of RYa-R. The protein is RYamide neuropeptides of Tribolium castaneum (Red flour beetle).